Consider the following 539-residue polypeptide: MPAIAGPSSSPQKHVVGSRSESIGGVRSAEVNTSRKRKLISDSAAEVSATVVLPVNSISTPMKWKSPRRCAVSIPKTSDEEIKEDSNEKLENPVISVCLEVKSKWNPKDDEQMKAVKEALHVSKAPSTVVCREDEQRRVFEFVKGCMEQKKAGSLYICGCPGTGKSLSMEKVRLQAEEWAKQAGLHCPETVSVNCTSLTKSTDIFSKILGNYESGKKANGSFSPLQQLQRLFSQKQQQSRSKMMLIIADEMDYLITRDRGVLHELFMLTTLPLSRCILIGTVFCVINVHFLKSVSYGQTSFKFKVRICPPGVANAIDLADRFLPKLKSLNCKPLVVTFRAYSKDQILRILQERLVALPFVAFQSNALEICARKVSAASGDMRKALCVCRSALEILEIEVRGSIDQEPKGPVPECQVVKMDHMIAALSKTFKSPIVDTIQSLPQHQQIIVCSAAKAFRGSKKDRTIAELNKLYLEICKSSMITPAGITEFSNMCTVLNDQGILKLSLARDDKLKRVSLRVDEADITFALKEIRFFRNCLL.

Residues 1–40 form a disordered region; the sequence is MPAIAGPSSSPQKHVVGSRSESIGGVRSAEVNTSRKRKLI. The Nuclear localization signal motif lies at 35-38; sequence RKRK.

It belongs to the CDC6/cdc18 family. In terms of tissue distribution, highly expressed in roots, flower buds and etiolated seedlings. Expressed in leaves and stems. Highly expressed in proliferating cells such as root meristems, leaf primordia and young growing leaves, as well as cells undergoing endoreduplication cycles.

The protein localises to the nucleus. In terms of biological role, may be involved in the initiation of DNA replication. May play a role in endoreduplication. Could act as one of the factors that contributes to maintain endoreduplication competence. The protein is Cell division control protein 6 homolog of Arabidopsis thaliana (Mouse-ear cress).